Consider the following 443-residue polypeptide: ATP-dependent protease ATPase subunit HslU (443 aa).

ATP is bound by residues I18, 60-65 (GVGKTE), D256, E321, and R393.

Belongs to the ClpX chaperone family. HslU subfamily. In terms of assembly, a double ring-shaped homohexamer of HslV is capped on each side by a ring-shaped HslU homohexamer. The assembly of the HslU/HslV complex is dependent on binding of ATP.

Its subcellular location is the cytoplasm. Functionally, ATPase subunit of a proteasome-like degradation complex; this subunit has chaperone activity. The binding of ATP and its subsequent hydrolysis by HslU are essential for unfolding of protein substrates subsequently hydrolyzed by HslV. HslU recognizes the N-terminal part of its protein substrates and unfolds these before they are guided to HslV for hydrolysis. The polypeptide is ATP-dependent protease ATPase subunit HslU (Edwardsiella ictaluri (strain 93-146)).